Reading from the N-terminus, the 167-residue chain is Mitochondrial inner membrane protease subunit 1 (167 aa).

Catalysis depends on residues serine 40 and lysine 83.

This sequence belongs to the peptidase S26 family. IMP1 subfamily. As to quaternary structure, heterodimer of 2 subunits, IMMPL1 and IMMPL2.

It localises to the mitochondrion inner membrane. Catalyzes the removal of transit peptides required for the targeting of proteins from the mitochondrial matrix, across the inner membrane, into the inter-membrane space. This is Mitochondrial inner membrane protease subunit 1 (immp1l) from Xenopus tropicalis (Western clawed frog).